A 505-amino-acid polypeptide reads, in one-letter code: L-carnitine/gamma-butyrobetaine antiporter (505 aa).

Helical transmembrane passes span 10 to 30, 51 to 71, 92 to 112, 143 to 163, 195 to 215, 231 to 251, 263 to 283, 316 to 336, 347 to 367, 403 to 423, 446 to 466, and 475 to 495; these read IEPK…WLTV, WGWA…WLVF, IFMM…SIEI, GPLP…FFFV, FYLV…TPLV, LDAI…ACGL, SYLS…SFIM, WTVF…IFLA, LCFG…TVLG, LSTA…VTLI, LLVR…LLAL, and AIIA…LSFI.

The protein belongs to the BCCT transporter (TC 2.A.15) family. CaiT subfamily. In terms of assembly, homotrimer.

The protein localises to the cell inner membrane. The enzyme catalyses 4-(trimethylamino)butanoate(in) + (R)-carnitine(out) = 4-(trimethylamino)butanoate(out) + (R)-carnitine(in). It participates in amine and polyamine metabolism; carnitine metabolism. Its function is as follows. Catalyzes the exchange of L-carnitine for gamma-butyrobetaine. The chain is L-carnitine/gamma-butyrobetaine antiporter from Salmonella agona (strain SL483).